Here is a 681-residue protein sequence, read N- to C-terminus: UvrABC system protein C (681 aa).

The segment at 1-23 (MNGKKLPDGGILFDETDDEDDDA) is disordered. Residues 14–23 (DETDDEDDDA) are compositionally biased toward acidic residues. The GIY-YIG domain occupies 67-145 (NSPGVYRMFN…IKRLRPRFNV (79 aa)). One can recognise a UVR domain in the interval 255–290 (QAVKTAIARQMNEASEDLDFERAAIYRDRLAALSHV).

This sequence belongs to the UvrC family. Interacts with UvrB in an incision complex.

It is found in the cytoplasm. The UvrABC repair system catalyzes the recognition and processing of DNA lesions. UvrC both incises the 5' and 3' sides of the lesion. The N-terminal half is responsible for the 3' incision and the C-terminal half is responsible for the 5' incision. This is UvrABC system protein C from Agrobacterium fabrum (strain C58 / ATCC 33970) (Agrobacterium tumefaciens (strain C58)).